We begin with the raw amino-acid sequence, 270 residues long: Tetraspanin-18 (270 aa).

Topologically, residues 1 to 15 are cytoplasmic; it reads MRRNCCHVSFASTLK. A helical membrane pass occupies residues 16–36; that stretch reads ILNFVQAFIGVSIIIYSIWML. The Extracellular portion of the chain corresponds to 37–99; the sequence is HEYSRHLPVD…LRSLDLPAPW (63 aa). A helical membrane pass occupies residues 100–120; it reads FIYSFMAVGILVCIVTFIGFI. Residues 121-132 are Cytoplasmic-facing; it reads AAEAINGCCLCF. A helical membrane pass occupies residues 133 to 153; it reads YSILKTLLILLEAALVAYIAI. The Extracellular portion of the chain corresponds to 154–183; it reads DRHWEKDLPYDPTGELSSLRAFIEENIDIC. The helical transmembrane segment at 184–204 threads the bilayer; the sequence is KWVGIAVVAVQLLSLLLAMVL. Residues 205 to 270 are Cytoplasmic-facing; the sequence is RAMVSTPKPE…NQSPPVNPKG (66 aa). The interval 212–249 is disordered; the sequence is KPELDEEEDDENPRSRTWDPLLGPQGNQAPAGSSKIEN. The segment covering 236–249 has biased composition (polar residues); the sequence is QGNQAPAGSSKIEN. The residue at position 245 (S245) is a Phosphoserine.

The protein belongs to the tetraspanin (TM4SF) family. Homodimer. Constituent of tobamovirus replication complex. Expressed in rosette leaves.

It localises to the membrane. It is found in the vacuole membrane. Its function is as follows. May be involved in the regulation of cell differentiation. Promotes intracellular multiplication of tobamoviruses, probably being a component of the replication complex. The polypeptide is Tetraspanin-18 (TOM2AH2) (Arabidopsis thaliana (Mouse-ear cress)).